The following is a 131-amino-acid chain: Small ribosomal subunit protein uS9 (131 aa).

Belongs to the universal ribosomal protein uS9 family.

The polypeptide is Small ribosomal subunit protein uS9 (Actinobacillus pleuropneumoniae serotype 5b (strain L20)).